A 66-amino-acid polypeptide reads, in one-letter code: Small ribosomal subunit protein bS21 (66 aa).

This sequence belongs to the bacterial ribosomal protein bS21 family.

This is Small ribosomal subunit protein bS21 from Rickettsia africae (strain ESF-5).